The primary structure comprises 566 residues: MDMLEMALNIAKDIEKSVKPLIGWEKSNEVVKIGADGTPTKRIDLIAENVAINSIEKVCSAILISEEIGFKRIGKNKPEYVIVLDPVDGTYNSLKDIPFYSAAVAIGRIDKFADNLEELINNLKMKDLEVGVVRNIATGDTYYAEKGKGAHFLRKGEKKSISISNSSNLKDSSIGLFAHDISIDTLKFIKDRRFRRIRLFGSIALEMCYVAKGALDAFINVNETTRLCDIAAGYVIIKEAGGIVTDKNGQEVNLDLDVNSKVSVICSNEMLHKKLVGIFGNRWRIKPTNFGIISRIDNEESIEVADNVIKYLDSKGIKYELDSSTYNALKNRLTKKCDIISNIEEISHMISIGGDGTVLRASKMIEGNEIPMVCINMGTVGFLTEFNKDEIFSAIDSIICGSYKVEKRTKLMGFAKLSDGKQHILNDSLNEVVITTKNPAKMMHFEVYIDGSLVEDVRADGIIVSTPNGSTAYSLSSGGPIIEPTVEGFVIVPICPFKLSSRPLVVNANSEIKIKLLKKSTYVVIDGNTEFEAKKGDEIILRKSESNAYFVKGDNFYNKLKKLSLM.

The segment at 1 to 283 (MDMLEMALNI…KLVGIFGNRW (283 aa)) is NADP phosphatase. 5 residues coordinate Mg(2+): glutamate 66, aspartate 85, valine 87, aspartate 88, and aspartate 229. Residues 275 to 566 (LVGIFGNRWR…YNKLKKLSLM (292 aa)) form an NAD kinase region. Aspartate 355 serves as the catalytic Proton acceptor. NAD(+) is bound by residues 355 to 356 (DG), arginine 360, 430 to 431 (NE), lysine 441, arginine 458, aspartate 460, 471 to 476 (TAYSLS), and asparagine 528.

The protein in the N-terminal section; belongs to the inositol monophosphatase superfamily. It in the C-terminal section; belongs to the NAD kinase family. As to quaternary structure, homotetramer. The cofactor is Mg(2+).

It localises to the cytoplasm. The catalysed reaction is NAD(+) + ATP = ADP + NADP(+) + H(+). The enzyme catalyses NADP(+) + H2O = phosphate + NAD(+). In terms of biological role, involved in the regulation of the intracellular balance between NAD(H) and NADP(H), and is a key enzyme in the biosynthesis of NADP. Catalyzes the phosphorylation and dephosphorylation of NAD and NADP, respectively. Although it shows conflicting dual activities and is able to supply NADP, it seems that its physiological role is to prevent excess accumulation of NADP. The chain is Bifunctional NADP phosphatase/NAD kinase from Methanococcus maripaludis (strain DSM 14266 / JCM 13030 / NBRC 101832 / S2 / LL).